The primary structure comprises 267 residues: Nus factor SuhB (267 aa).

Mg(2+) is bound by residues Glu67, Asp84, and Leu86. A substrate-binding site is contributed by Glu67. Substrate-binding positions include 86-89, Arg183, and Asp212; that span reads LDGT.

It belongs to the inositol monophosphatase superfamily. Homodimer. The rRNA transcription and antitermination complex (rrnTAC) consists of RNA polymerase (RNAP), NusA, NusB, NusE (rpsJ), NusG, SubB, ribosomal protein S4, DNA and precursor rRNA; S4 is more flexible than other subunits. Requires Mg(2+) as cofactor.

The protein localises to the cytoplasm. It carries out the reaction a myo-inositol phosphate + H2O = myo-inositol + phosphate. In terms of biological role, part of the processive rRNA transcription and antitermination complex (rrnTAC). The complex forms an RNA-chaperone ring around the RNA exit tunnel of RNA polymerase (RNAP). It supports rapid transcription and antitermination of rRNA operons, cotranscriptional rRNA folding, and annealing of distal rRNA regions to allow correct ribosome biogenesis. This subunit may play a central role in organizing the structure. The polypeptide is Nus factor SuhB (Vibrio cholerae serotype O1 (strain ATCC 39315 / El Tor Inaba N16961)).